Here is a 274-residue protein sequence, read N- to C-terminus: MQQLQSIIESAFENRATLTPATVNHETRDAVTQVINLLDSGKLRVAEKIDGQWVTHQWLKMAVLLSFRINENQIIDGTESRYFDKVPMKFSDYDQTRFEKEGFRVVPPAAARQGAFIARNCVLMPSYVNIGAYVDEGTMVDTWTTVGSCAQIGKNVHLSGGVGIGGVLEPLQANPTIIEDNCFIGARSEIVEGVIIEEGSVISMGVYIGQSTKIYDRETGEIHYGRVPAGSVVVSGNLPSKDGSYSLYCAVIVKKVDAKTQGKVGINELLRSID.

Substrate contacts are provided by arginine 104 and aspartate 141.

It belongs to the transferase hexapeptide repeat family. In terms of assembly, homotrimer.

It localises to the cytoplasm. The enzyme catalyses (S)-2,3,4,5-tetrahydrodipicolinate + succinyl-CoA + H2O = (S)-2-succinylamino-6-oxoheptanedioate + CoA. It participates in amino-acid biosynthesis; L-lysine biosynthesis via DAP pathway; LL-2,6-diaminopimelate from (S)-tetrahydrodipicolinate (succinylase route): step 1/3. The protein is 2,3,4,5-tetrahydropyridine-2,6-dicarboxylate N-succinyltransferase of Photorhabdus laumondii subsp. laumondii (strain DSM 15139 / CIP 105565 / TT01) (Photorhabdus luminescens subsp. laumondii).